Reading from the N-terminus, the 628-residue chain is MSVSIDDYPLLAQVPDPEALRTLPAHRLPALAKELRHYLLHSVARSGGHLAAGLGAVELTLALHYVFNTPEDRLVWDVGHQCYPHKILTGRRERLGTIRKYGGLAGFPKRAESPYDTFGVGHSSTSISAALGMALAARQAGEQRKAVAIIGDGGMTAGEAFEAMNHAGDAGADLLVVLNDNEMSISENVGALSQHLTRILSGRWYHQLRSGSKEVLRRLPPPVHELARRTEEHLKGMVVPGTLFEELGFQYFGPVDGHNVDALVEVLGNLAHQRGPRLLHVVTCKGKGYRPAEQDPIAYHGVGQFDPEQGLPKKSGGSLAYNQVFGRWLCAMAEQDPRLVAITPAMREGSGMVEYARRFPERYHDVGIAEQHAVTLAAGLACESVKPVLAIYSTFLQRGYDQLVHDVALQNLPVLFAVDRAGLVGADGPTHHGSFDLSYLRCVPNMTIAAPSDEAECWRLLSTGYHHDGPFAVRYPRGSGPGAALPEADLDPLAIGKGVCRRRGRRIAVLAFGTLVVPALAVAEALDLTVADMRFVRPLDEALIRELADTHDLLVTVEENAVAGGAGSGVSEYLARAGLDVPVRHLGLPDRFVDHGTPAELLAEVGLDEAGLQRSLQGWLDTLPGASR.

Thiamine diphosphate-binding positions include His80 and 121 to 123 (GHS). Asp152 is a binding site for Mg(2+). Thiamine diphosphate-binding positions include 153–154 (GG), Asn181, Tyr289, and Glu370. Asn181 is a Mg(2+) binding site.

The protein belongs to the transketolase family. DXPS subfamily. As to quaternary structure, homodimer. The cofactor is Mg(2+). Requires thiamine diphosphate as cofactor.

The catalysed reaction is D-glyceraldehyde 3-phosphate + pyruvate + H(+) = 1-deoxy-D-xylulose 5-phosphate + CO2. The protein operates within metabolic intermediate biosynthesis; 1-deoxy-D-xylulose 5-phosphate biosynthesis; 1-deoxy-D-xylulose 5-phosphate from D-glyceraldehyde 3-phosphate and pyruvate: step 1/1. Its function is as follows. Catalyzes the acyloin condensation reaction between C atoms 2 and 3 of pyruvate and glyceraldehyde 3-phosphate to yield 1-deoxy-D-xylulose-5-phosphate (DXP). The polypeptide is 1-deoxy-D-xylulose-5-phosphate synthase (Alkalilimnicola ehrlichii (strain ATCC BAA-1101 / DSM 17681 / MLHE-1)).